We begin with the raw amino-acid sequence, 175 residues long: Large ribosomal subunit protein uL10 (175 aa).

The protein belongs to the universal ribosomal protein uL10 family. As to quaternary structure, part of the ribosomal stalk of the 50S ribosomal subunit. The N-terminus interacts with L11 and the large rRNA to form the base of the stalk. The C-terminus forms an elongated spine to which L12 dimers bind in a sequential fashion forming a multimeric L10(L12)X complex.

In terms of biological role, forms part of the ribosomal stalk, playing a central role in the interaction of the ribosome with GTP-bound translation factors. The protein is Large ribosomal subunit protein uL10 of Prochlorococcus marinus (strain MIT 9211).